Consider the following 263-residue polypeptide: Hydroxyethylthiazole kinase 2 (263 aa).

Residue M42 coordinates substrate. Residues K118 and T164 each contribute to the ATP site. G191 provides a ligand contact to substrate.

Belongs to the Thz kinase family. Mg(2+) serves as cofactor.

It catalyses the reaction 5-(2-hydroxyethyl)-4-methylthiazole + ATP = 4-methyl-5-(2-phosphooxyethyl)-thiazole + ADP + H(+). Its pathway is cofactor biosynthesis; thiamine diphosphate biosynthesis; 4-methyl-5-(2-phosphoethyl)-thiazole from 5-(2-hydroxyethyl)-4-methylthiazole: step 1/1. Its function is as follows. Catalyzes the phosphorylation of the hydroxyl group of 4-methyl-5-beta-hydroxyethylthiazole (THZ). This Clostridium botulinum (strain Loch Maree / Type A3) protein is Hydroxyethylthiazole kinase 2.